The primary structure comprises 108 residues: Thioredoxin Asp f 28 (108 aa).

The 108-residue stretch at 1–108 folds into the Thioredoxin domain; the sequence is MSHGKVIAVD…LEEMIKSISA (108 aa). Active-site nucleophile residues include Cys33 and Cys36. Cys33 and Cys36 are joined by a disulfide.

Belongs to the thioredoxin family.

Participates in various redox reactions through the reversible oxidation of its active center dithiol to a disulfide and catalyzes dithiol-disulfide exchange reactions. The protein is Thioredoxin Asp f 28 of Aspergillus fumigatus (Neosartorya fumigata).